A 530-amino-acid polypeptide reads, in one-letter code: AAA-ATPase At3g28510 (530 aa).

A helical membrane pass occupies residues 5–25 (GAIWGITGTTVTSFMFFWAIY). 250-257 (GPPGTGKS) contributes to the ATP binding site. Disordered regions lie at residues 312–339 (QRKKKKEEDEEEDGEEKKEGEKKPKVDD) and 463–530 (KARK…KSDS). Basic and acidic residues-rich tracts occupy residues 326-339 (EEKKEGEKKPKVDD) and 463-511 (KARK…KEEN). Residues 512–523 (GNVSQQNGNSID) show a composition bias toward polar residues.

It belongs to the AAA ATPase family. BCS1 subfamily. The cofactor is Mg(2+).

Its subcellular location is the membrane. It catalyses the reaction ATP + H2O = ADP + phosphate + H(+). In Arabidopsis thaliana (Mouse-ear cress), this protein is AAA-ATPase At3g28510.